Reading from the N-terminus, the 294-residue chain is MHPRFQTAFAQLADNLQSALAPILADHHFPAMLTAEQVSTLKNTAGLDEDALAFALLPLAAACARTDLSHFNVGAIARGVSGNWYFGANMEFLGATMQQTVHAEQSAISHAWLRGEKGLAAVTVNYTPCGHCRQFMNELNSGLDLRIHLPGRAPHTLRDYLPDAFGPKDLEIKTLLMDEQDHGFTLTGDTLTQAAITAANKSHMPYSHSPSGVALECKDGRIFTGSYAENAAFNPTLPPLQGALNLLSLNGYDYADIQRAILAEKGDAALIQWDATAATLKALGCHNIDRVLLG.

CMP/dCMP-type deaminase domains follow at residues 48 to 168 (DEDA…FGPK) and 186 to 294 (LTGD…VLLG). 89–91 (NME) contacts substrate. Zn(2+) is bound at residue H102. Catalysis depends on E104, which acts as the Proton donor. Residues C129 and C132 each contribute to the Zn(2+) site.

It belongs to the cytidine and deoxycytidylate deaminase family. Homodimer. Zn(2+) serves as cofactor.

It carries out the reaction cytidine + H2O + H(+) = uridine + NH4(+). The enzyme catalyses 2'-deoxycytidine + H2O + H(+) = 2'-deoxyuridine + NH4(+). Its function is as follows. This enzyme scavenges exogenous and endogenous cytidine and 2'-deoxycytidine for UMP synthesis. This chain is Cytidine deaminase, found in Salmonella enteritidis PT4 (strain P125109).